The sequence spans 412 residues: Divalent metal cation transporter MntH (412 aa).

Topologically, residues 1–19 (MTNYRVESSSGRAARKTRL) are cytoplasmic. The helical transmembrane segment at 20–39 (ALMGPAFIAAIGYIDPGNFA) threads the bilayer. Residues 40-51 (TNIQAGASFGYQ) lie on the Periplasmic side of the membrane. The helical transmembrane segment at 52–71 (LLWVVVWANLMAMLIQILSA) threads the bilayer. At 72–95 (KLGIATGKNLAEQIRDHYPRPVVW) the chain is on the cytoplasmic side. Residues 96–118 (FYWVQAEIIAMATDLAEFIGAAI) form a helical membrane-spanning segment. Residues 119–125 (GFKLILG) are Periplasmic-facing. The helical transmembrane segment at 126 to 145 (VSLLQGAVLTGIATFLILML) threads the bilayer. Residues 146–155 (QRRGQKPLEK) are Cytoplasmic-facing. The chain crosses the membrane as a helical span at residues 156–175 (VIGGLLLFVAAAYIVELIFS). The Periplasmic portion of the chain corresponds to 176 to 196 (QPNLAQLGKGMVIPSLPTSEA). Residues 197-220 (VFLAAGVLGATIMPHVIYLHSSLT) traverse the membrane as a helical segment. The Cytoplasmic segment spans residues 221–238 (QHLHGGSRQQRYSATKWD). The chain crosses the membrane as a helical span at residues 239–258 (VAIAMTIAGFVNLAMMATAA). Residues 259-276 (AAFHFSGHTGVADLDEAY) lie on the Periplasmic side of the membrane. The helical transmembrane segment at 277–297 (LTLQPLLSHAAATVFGLSLVA) threads the bilayer. Over 298–327 (AGLSSTVVGTLAGQVVMQGFIRFHIPLWVR) the chain is Cytoplasmic. Residues 328–344 (RTVTMLPSFIVILMGLD) form a helical membrane-spanning segment. Topologically, residues 345–350 (PTRILV) are periplasmic. A helical membrane pass occupies residues 351-370 (MSQVLLSFGIALALVPLLIF). The Cytoplasmic portion of the chain corresponds to 371–387 (TSDSKLMGDLVNSKRVK). A helical membrane pass occupies residues 388 to 406 (QTGWVIVVLVVALNIWLLV). The Periplasmic segment spans residues 407–412 (GTALGL).

This sequence belongs to the NRAMP family.

It localises to the cell inner membrane. H(+)-stimulated, divalent metal cation uptake system. The chain is Divalent metal cation transporter MntH from Escherichia coli O9:H4 (strain HS).